Reading from the N-terminus, the 395-residue chain is Galactokinase (395 aa).

39–42 (EHTD) lines the substrate pocket. ATP contacts are provided by residues serine 73 and 127–133 (GAGLSSS). Mg(2+) is bound by residues serine 133 and glutamate 165. Catalysis depends on aspartate 177, which acts as the Proton acceptor. Tyrosine 227 is a binding site for substrate.

The protein belongs to the GHMP kinase family. GalK subfamily.

Its subcellular location is the cytoplasm. It carries out the reaction alpha-D-galactose + ATP = alpha-D-galactose 1-phosphate + ADP + H(+). Its pathway is carbohydrate metabolism; galactose metabolism. Catalyzes the transfer of the gamma-phosphate of ATP to D-galactose to form alpha-D-galactose-1-phosphate (Gal-1-P). This is Galactokinase from Halalkalibacterium halodurans (strain ATCC BAA-125 / DSM 18197 / FERM 7344 / JCM 9153 / C-125) (Bacillus halodurans).